We begin with the raw amino-acid sequence, 118 residues long: Large ribosomal subunit protein uL18 (118 aa).

This sequence belongs to the universal ribosomal protein uL18 family. In terms of assembly, part of the 50S ribosomal subunit; part of the 5S rRNA/L5/L18/L25 subcomplex. Contacts the 5S and 23S rRNAs.

Functionally, this is one of the proteins that bind and probably mediate the attachment of the 5S RNA into the large ribosomal subunit, where it forms part of the central protuberance. In Levilactobacillus brevis (strain ATCC 367 / BCRC 12310 / CIP 105137 / JCM 1170 / LMG 11437 / NCIMB 947 / NCTC 947) (Lactobacillus brevis), this protein is Large ribosomal subunit protein uL18.